Reading from the N-terminus, the 194-residue chain is Ion-translocating oxidoreductase complex subunit B (194 aa).

Positions 1-26 (MSGVLIAVAALLALAAVFGAVLGFAS) are hydrophobic. A 4Fe-4S domain is found at 32-90 (EGDPIVDQIDSLLPQTQCGQCGHPGCRPYAEAIAEGEEHNRCPPGGQDTVVALSELLGR). Positions 49, 52, 57, 73, 116, 119, 122, 126, 146, 149, 152, and 156 each coordinate [4Fe-4S] cluster. 2 consecutive 4Fe-4S ferredoxin-type domains span residues 107 to 136 (KVAY…GAAK) and 137 to 166 (LMHT…MLEV).

This sequence belongs to the 4Fe4S bacterial-type ferredoxin family. RnfB subfamily. In terms of assembly, the complex is composed of six subunits: RnfA, RnfB, RnfC, RnfD, RnfE and RnfG. It depends on [4Fe-4S] cluster as a cofactor.

Its subcellular location is the cell inner membrane. Its function is as follows. Part of a membrane-bound complex that couples electron transfer with translocation of ions across the membrane. This is Ion-translocating oxidoreductase complex subunit B from Alcanivorax borkumensis (strain ATCC 700651 / DSM 11573 / NCIMB 13689 / SK2).